The chain runs to 538 residues: Chaperonin GroEL (538 aa).

ATP-binding positions include 29–32 (TLGP), 86–90 (DGTTT), Gly-413, 479–481 (DAL), and Asp-495.

The protein belongs to the chaperonin (HSP60) family. Forms a cylinder of 14 subunits composed of two heptameric rings stacked back-to-back. Interacts with the co-chaperonin GroES.

The protein resides in the cytoplasm. It carries out the reaction ATP + H2O + a folded polypeptide = ADP + phosphate + an unfolded polypeptide.. Functionally, together with its co-chaperonin GroES, plays an essential role in assisting protein folding. The GroEL-GroES system forms a nano-cage that allows encapsulation of the non-native substrate proteins and provides a physical environment optimized to promote and accelerate protein folding. The polypeptide is Chaperonin GroEL (Fervidobacterium nodosum (strain ATCC 35602 / DSM 5306 / Rt17-B1)).